Here is a 343-residue protein sequence, read N- to C-terminus: 4-hydroxythreonine-4-phosphate dehydrogenase (343 aa).

2 residues coordinate substrate: histidine 141 and threonine 142. Histidine 175, histidine 220, and histidine 275 together coordinate a divalent metal cation. 3 residues coordinate substrate: lysine 283, asparagine 292, and arginine 301.

This sequence belongs to the PdxA family. In terms of assembly, homodimer. Zn(2+) is required as a cofactor. Requires Mg(2+) as cofactor. Co(2+) serves as cofactor.

Its subcellular location is the cytoplasm. It carries out the reaction 4-(phosphooxy)-L-threonine + NAD(+) = 3-amino-2-oxopropyl phosphate + CO2 + NADH. It functions in the pathway cofactor biosynthesis; pyridoxine 5'-phosphate biosynthesis; pyridoxine 5'-phosphate from D-erythrose 4-phosphate: step 4/5. Its function is as follows. Catalyzes the NAD(P)-dependent oxidation of 4-(phosphooxy)-L-threonine (HTP) into 2-amino-3-oxo-4-(phosphooxy)butyric acid which spontaneously decarboxylates to form 3-amino-2-oxopropyl phosphate (AHAP). The chain is 4-hydroxythreonine-4-phosphate dehydrogenase from Janthinobacterium sp. (strain Marseille) (Minibacterium massiliensis).